We begin with the raw amino-acid sequence, 589 residues long: L-fucose isomerase (589 aa).

Active-site proton acceptor residues include Glu-340 and Asp-364. Glu-340, Asp-364, and His-527 together coordinate Mn(2+).

It belongs to the L-fucose isomerase family. Mn(2+) is required as a cofactor.

It localises to the cytoplasm. It catalyses the reaction L-fucose = L-fuculose. The protein operates within carbohydrate degradation; L-fucose degradation; L-lactaldehyde and glycerone phosphate from L-fucose: step 1/3. Its function is as follows. Converts the aldose L-fucose into the corresponding ketose L-fuculose. In Haemophilus influenzae (strain PittEE), this protein is L-fucose isomerase.